The chain runs to 98 residues: NADH-ubiquinone oxidoreductase chain 4L (98 aa).

3 consecutive transmembrane segments (helical) span residues 1–21 (MSMV…GLLM), 29–49 (SLLC…MTIL), and 61–81 (IILL…LVMV).

It belongs to the complex I subunit 4L family. Core subunit of respiratory chain NADH dehydrogenase (Complex I) which is composed of 45 different subunits.

The protein resides in the mitochondrion inner membrane. The catalysed reaction is a ubiquinone + NADH + 5 H(+)(in) = a ubiquinol + NAD(+) + 4 H(+)(out). Core subunit of the mitochondrial membrane respiratory chain NADH dehydrogenase (Complex I) which catalyzes electron transfer from NADH through the respiratory chain, using ubiquinone as an electron acceptor. Part of the enzyme membrane arm which is embedded in the lipid bilayer and involved in proton translocation. This Phocarctos hookeri (Hooker's sea lion) protein is NADH-ubiquinone oxidoreductase chain 4L (MT-ND4L).